Consider the following 534-residue polypeptide: Fimbrial subunit type 2 (534 aa).

An N-terminal signal peptide occupies residues Met-1–Ala-32. Disordered regions lie at residues Gly-56–Ala-76 and Thr-329–Gly-376. Over residues Pro-334 to Pro-347 the composition is skewed to pro residues. The span at Thr-361 to Gly-376 shows a compositional bias: basic and acidic residues. Residues Leu-492–Gly-496 carry the LPXTG sorting signal motif. At Thr-495 the chain carries Pentaglycyl murein peptidoglycan amidated threonine. Residues Gly-496–Ala-534 constitute a propeptide, removed by sortase.

It localises to the secreted. The protein localises to the cell wall. It is found in the fimbrium. Its function is as follows. Major fimbrial subunit of A.naeslundii. The polypeptide is Fimbrial subunit type 2 (Actinomyces naeslundii).